Consider the following 560-residue polypeptide: Membrane protein insertase YidC (560 aa).

6 consecutive transmembrane segments (helical) span residues 5–25 (IINLIAAIVLSLSIIFGWQYF), 334–354 (AIDFGWFYIITKPVFYAMNFF), 357–377 (YVGNFGVSILIVTVIIKLLMF), 431–451 (LPILVQIPVFFSIYKVLYVTI), 476–496 (LFGLLPFSPPSFLMIGAWPIL), and 522–542 (FMPLIFLFMFSSFPVGLLIYW).

It belongs to the OXA1/ALB3/YidC family. Type 1 subfamily. In terms of assembly, interacts with the Sec translocase complex via SecD. Specifically interacts with transmembrane segments of nascent integral membrane proteins during membrane integration.

It localises to the cell inner membrane. Functionally, required for the insertion and/or proper folding and/or complex formation of integral membrane proteins into the membrane. Involved in integration of membrane proteins that insert both dependently and independently of the Sec translocase complex, as well as at least some lipoproteins. Aids folding of multispanning membrane proteins. This chain is Membrane protein insertase YidC, found in Rickettsia akari (strain Hartford).